The following is a 79-amino-acid chain: MKTLLLTLVVMTIVCLDLGYTLTCYMNPSGTMVCKEHETMCYQLIVWTFQYRVLYLKGCTSSCPGGNNRACCSTDLCNN.

A signal peptide spans 1–23 (MKTLLLTLVVMTIVCLDLGYTLT). 4 disulfide bridges follow: Cys24/Cys41, Cys34/Cys59, Cys63/Cys71, and Cys72/Cys77.

This sequence belongs to the three-finger toxin family. Short-chain subfamily. As to expression, expressed by the venom gland.

It is found in the secreted. This Oxyuranus scutellatus scutellatus (Australian taipan) protein is Short neurotoxin 3.